Reading from the N-terminus, the 417-residue chain is D-amino acid dehydrogenase (417 aa).

Position 3–17 (3–17 (VVILGSGVVGVSTAW)) interacts with FAD.

Belongs to the DadA oxidoreductase family. The cofactor is FAD.

The enzyme catalyses a D-alpha-amino acid + A + H2O = a 2-oxocarboxylate + AH2 + NH4(+). It functions in the pathway amino-acid degradation; D-alanine degradation; NH(3) and pyruvate from D-alanine: step 1/1. Its function is as follows. Oxidative deamination of D-amino acids. The polypeptide is D-amino acid dehydrogenase (Pectobacterium atrosepticum (strain SCRI 1043 / ATCC BAA-672) (Erwinia carotovora subsp. atroseptica)).